Consider the following 479-residue polypeptide: Aspartyl/glutamyl-tRNA(Asn/Gln) amidotransferase subunit B (479 aa).

The protein belongs to the GatB/GatE family. GatB subfamily. In terms of assembly, heterotrimer of A, B and C subunits.

It carries out the reaction L-glutamyl-tRNA(Gln) + L-glutamine + ATP + H2O = L-glutaminyl-tRNA(Gln) + L-glutamate + ADP + phosphate + H(+). It catalyses the reaction L-aspartyl-tRNA(Asn) + L-glutamine + ATP + H2O = L-asparaginyl-tRNA(Asn) + L-glutamate + ADP + phosphate + 2 H(+). Allows the formation of correctly charged Asn-tRNA(Asn) or Gln-tRNA(Gln) through the transamidation of misacylated Asp-tRNA(Asn) or Glu-tRNA(Gln) in organisms which lack either or both of asparaginyl-tRNA or glutaminyl-tRNA synthetases. The reaction takes place in the presence of glutamine and ATP through an activated phospho-Asp-tRNA(Asn) or phospho-Glu-tRNA(Gln). The polypeptide is Aspartyl/glutamyl-tRNA(Asn/Gln) amidotransferase subunit B (Clostridium beijerinckii (strain ATCC 51743 / NCIMB 8052) (Clostridium acetobutylicum)).